A 161-amino-acid polypeptide reads, in one-letter code: uncharacterized protein (161 aa).

The chain crosses the membrane as a helical span at residues 5 to 25; the sequence is GPTLLSLLAALLVSLGLLLWY.

This sequence belongs to the IIV-6 203L/325L family.

The protein resides in the membrane. This is an uncharacterized protein from Invertebrate iridescent virus 3 (IIV-3).